A 314-amino-acid polypeptide reads, in one-letter code: Homoserine kinase (314 aa).

95–105 (PHSRGLGSSAA) contacts ATP.

Belongs to the GHMP kinase family. Homoserine kinase subfamily.

The protein localises to the cytoplasm. It carries out the reaction L-homoserine + ATP = O-phospho-L-homoserine + ADP + H(+). It functions in the pathway amino-acid biosynthesis; L-threonine biosynthesis; L-threonine from L-aspartate: step 4/5. Catalyzes the ATP-dependent phosphorylation of L-homoserine to L-homoserine phosphate. In Mycobacterium sp. (strain KMS), this protein is Homoserine kinase.